A 273-amino-acid polypeptide reads, in one-letter code: Undecaprenyl-diphosphatase (273 aa).

8 helical membrane-spanning segments follow: residues 3 to 23, 47 to 67, 90 to 110, 120 to 140, 148 to 168, 186 to 206, 217 to 237, and 249 to 269; these read IILW…EFLP, ALDA…WQDI, LLLG…LLKL, IIAT…QWGS, IGIL…LPGA, PTAA…ATLV, LLIP…LAIA, and WVFI…IALG.

Belongs to the UppP family.

The protein localises to the cell inner membrane. It catalyses the reaction di-trans,octa-cis-undecaprenyl diphosphate + H2O = di-trans,octa-cis-undecaprenyl phosphate + phosphate + H(+). Catalyzes the dephosphorylation of undecaprenyl diphosphate (UPP). Confers resistance to bacitracin. The protein is Undecaprenyl-diphosphatase of Thermosynechococcus vestitus (strain NIES-2133 / IAM M-273 / BP-1).